A 445-amino-acid polypeptide reads, in one-letter code: Phosphoglucosamine mutase (445 aa).

The active-site Phosphoserine intermediate is Ser-102. 4 residues coordinate Mg(2+): Ser-102, Asp-241, Asp-243, and Asp-245. At Ser-102 the chain carries Phosphoserine.

It belongs to the phosphohexose mutase family. It depends on Mg(2+) as a cofactor. Activated by phosphorylation.

The enzyme catalyses alpha-D-glucosamine 1-phosphate = D-glucosamine 6-phosphate. Functionally, catalyzes the conversion of glucosamine-6-phosphate to glucosamine-1-phosphate. This Pectobacterium carotovorum subsp. carotovorum (strain PC1) protein is Phosphoglucosamine mutase.